The sequence spans 590 residues: Pentatricopeptide repeat-containing protein At1g63070, mitochondrial (590 aa).

The transit peptide at 1–34 (MMRSVAVIGKKCLHRHTVLLKGNPRTTLCWERSF) directs the protein to the mitochondrion. 14 PPR repeats span residues 74-108 (SIVE…GISH), 109-143 (NLYT…GYGP), 144-178 (SIVT…GYQP), 179-213 (DTVT…GCQP), 214-248 (DLVT…KIEA), 249-283 (DVVI…GIKP), 284-318 (DVFT…NINP), 319-353 (DLVF…KHCF), 355-389 (DVVA…GLVG), 390-424 (NTVT…GVHP), 425-459 (DIMT…DMKL), 460-494 (DIVT…GVKP), 495-529 (NVVT…GPLP), and 530-564 (NSGT…GFAG).

It belongs to the PPR family. P subfamily.

The protein resides in the mitochondrion. The chain is Pentatricopeptide repeat-containing protein At1g63070, mitochondrial from Arabidopsis thaliana (Mouse-ear cress).